A 242-amino-acid chain; its full sequence is Ferritin, mitochondrial (242 aa).

The N-terminal 49 residues, M1–L49, are a transit peptide targeting the mitochondrion. The region spanning Q70–G219 is the Ferritin-like diiron domain. Positions 87, 122, 125, 167, and 201 each coordinate Fe cation.

This sequence belongs to the ferritin family. In terms of assembly, homooligomer of 24 subunits. The functional molecule is roughly spherical and contains a central cavity into which the polymeric mineral iron core is deposited.

The protein localises to the mitochondrion. It carries out the reaction 4 Fe(2+) + O2 + 4 H(+) = 4 Fe(3+) + 2 H2O. In terms of biological role, catalyzes the oxidation of ferrous iron(II) to ferric iron(III) and stores iron in a soluble, non-toxic, readily available form. Important for iron homeostasis. Iron is taken up in the ferrous form and deposited as ferric hydroxides after oxidation. The protein is Ferritin, mitochondrial of Bos taurus (Bovine).